Here is a 317-residue protein sequence, read N- to C-terminus: Large ribosomal subunit protein uL10 (317 aa).

Residue tyrosine 24 is modified to Phosphotyrosine. Threonine 59 bears the Phosphothreonine mark. Lysine 264 is covalently cross-linked (Glycyl lysine isopeptide (Lys-Gly) (interchain with G-Cter in ubiquitin)). Positions 294 to 317 (APAKVEAKEESEESDEDMGFGLFD) are disordered. Lysine 297 participates in a covalent cross-link: Glycyl lysine isopeptide (Lys-Gly) (interchain with G-Cter in SUMO1); alternate. Lysine 297 is covalently cross-linked (Glycyl lysine isopeptide (Lys-Gly) (interchain with G-Cter in SUMO2); alternate). A compositionally biased stretch (acidic residues) spans 302-311 (EESEESDEDM). Phosphoserine occurs at positions 304 and 307.

This sequence belongs to the universal ribosomal protein uL10 family. As to quaternary structure, P0 forms a pentameric complex by interaction with dimers of P1 and P2. Identified in a IGF2BP1-dependent mRNP granule complex containing untranslated mRNAs. Interacts with APEX1. Interacts with FMR1 isoform 6. Ubiquitinated at Lys-264 by RNF14 and RNF25 in response to ribosome collisions (ribosome stalling).

It localises to the nucleus. Its subcellular location is the cytoplasm. Functionally, ribosomal protein P0 is the functional equivalent of E.coli protein L10. This is Large ribosomal subunit protein uL10 (RPLP0) from Homo sapiens (Human).